A 496-amino-acid polypeptide reads, in one-letter code: Pup--protein ligase (496 aa).

Residue Glu-30 participates in Mg(2+) binding. ATP is bound at residue Arg-73. A Mg(2+)-binding site is contributed by Tyr-75. The active-site Proton acceptor is Asp-77. Glu-83 is a Mg(2+) binding site. Thr-86 and Trp-450 together coordinate ATP.

Belongs to the Pup ligase/Pup deamidase family. Pup-conjugating enzyme subfamily.

The catalysed reaction is ATP + [prokaryotic ubiquitin-like protein]-L-glutamate + [protein]-L-lysine = ADP + phosphate + N(6)-([prokaryotic ubiquitin-like protein]-gamma-L-glutamyl)-[protein]-L-lysine.. Its pathway is protein degradation; proteasomal Pup-dependent pathway. The protein operates within protein modification; protein pupylation. Catalyzes the covalent attachment of the prokaryotic ubiquitin-like protein modifier Pup to the proteasomal substrate proteins, thereby targeting them for proteasomal degradation. This tagging system is termed pupylation. The ligation reaction involves the side-chain carboxylate of the C-terminal glutamate of Pup and the side-chain amino group of a substrate lysine. This is Pup--protein ligase from Bifidobacterium animalis subsp. lactis (strain AD011).